Here is a 218-residue protein sequence, read N- to C-terminus: GTP cyclohydrolase 1 (218 aa).

C109, H112, and C180 together coordinate Zn(2+).

This sequence belongs to the GTP cyclohydrolase I family. Toroid-shaped homodecamer, composed of two pentamers of five dimers.

The catalysed reaction is GTP + H2O = 7,8-dihydroneopterin 3'-triphosphate + formate + H(+). The protein operates within cofactor biosynthesis; 7,8-dihydroneopterin triphosphate biosynthesis; 7,8-dihydroneopterin triphosphate from GTP: step 1/1. This Haemophilus influenzae (strain ATCC 51907 / DSM 11121 / KW20 / Rd) protein is GTP cyclohydrolase 1 (folE).